A 241-amino-acid chain; its full sequence is Phosphoribosylaminoimidazole-succinocarboxamide synthase (241 aa).

Belongs to the SAICAR synthetase family.

The catalysed reaction is 5-amino-1-(5-phospho-D-ribosyl)imidazole-4-carboxylate + L-aspartate + ATP = (2S)-2-[5-amino-1-(5-phospho-beta-D-ribosyl)imidazole-4-carboxamido]succinate + ADP + phosphate + 2 H(+). Its pathway is purine metabolism; IMP biosynthesis via de novo pathway; 5-amino-1-(5-phospho-D-ribosyl)imidazole-4-carboxamide from 5-amino-1-(5-phospho-D-ribosyl)imidazole-4-carboxylate: step 1/2. This chain is Phosphoribosylaminoimidazole-succinocarboxamide synthase, found in Caldivirga maquilingensis (strain ATCC 700844 / DSM 13496 / JCM 10307 / IC-167).